The following is a 103-amino-acid chain: Translation initiation factor 1A (103 aa).

Positions Thr11–Thr86 constitute an S1-like domain.

This sequence belongs to the eIF-1A family.

Functionally, seems to be required for maximal rate of protein biosynthesis. Enhances ribosome dissociation into subunits and stabilizes the binding of the initiator Met-tRNA(I) to 40 S ribosomal subunits. This is Translation initiation factor 1A (eIF1A) from Methanococcus maripaludis (strain C5 / ATCC BAA-1333).